Consider the following 390-residue polypeptide: MRTLLITGPGGTGRTTVAAATALTAARQGTRTLVLGTDRDDTLGAALGVRTGPAPTSVEPGLTAWRPDAAQGFRDALAALQDRAASALDLLGAARLDPQELTPLPGADDLALLRALREAALAEAHDLLVVDLPPAPRALALLAAPEELRRALRRLLPPERQAARALRPVLGRLAGVPMPTEALYEAAARWDLELAAAESVLADRNTVVRLVAEPGPAGADAVRTTTLGLALRGLRTDLLVANRVLPEDTPADSWLSGPLAQQRKTLEEWRGAYDVRAVAHLGHDPRGTDDLAALAVPGVNPDASPVEWPVTDRLAEDGVLVWHIPLPGAVREELDLVRRGDELAVAAGPFRRTVPLPSALRRCTVDGAALRDGTLAVRFAPDPELWPRGR.

This sequence belongs to the arsA ATPase family.

This is an uncharacterized protein from Streptomyces coelicolor (strain ATCC BAA-471 / A3(2) / M145).